An 82-amino-acid chain; its full sequence is Small ribosomal subunit protein bS16 (82 aa).

It belongs to the bacterial ribosomal protein bS16 family.

This is Small ribosomal subunit protein bS16 from Synechococcus elongatus (strain ATCC 33912 / PCC 7942 / FACHB-805) (Anacystis nidulans R2).